Reading from the N-terminus, the 877-residue chain is Kinetochore null protein 2 (877 aa).

The SANTA domain occupies 20 to 107; that stretch reads IRLNLWSMKF…SNGIPENWAD (88 aa). Disordered regions lie at residues 122–315, 338–535, and 549–604; these read RPIQ…SKSV, FEST…ESLN, and MMFG…NDSI. Residues 153–211 adopt a coiled-coil conformation; sequence QKNSENEKERNRREREEQQTKERERRLEEEKQRRDAEAEAERRRKEEEELEEANYTLRA. Residues 156 to 199 show a composition bias toward basic and acidic residues; that stretch reads SENEKERNRREREEQQTKERERRLEEEKQRRDAEAEAERRRKEE. Over residues 251-279 the composition is skewed to polar residues; the sequence is IASSTPQQKQRLADGANNQIPPTQKSQDS. Basic and acidic residues-rich tracts occupy residues 359 to 385, 394 to 444, and 453 to 480; these read EPRH…DNSR, RRHE…RGRD, and VRFE…DYGR. Positions 491 to 549 form a coiled coil; it reads EDEEKLNAIVRREKELRNRLQKSQKASSSSYRHRSNSSDAEESLNEWDIENQELLDNSM. A compositionally biased stretch (low complexity) spans 511–520; the sequence is QKSQKASSSS. Over residues 573–583 the composition is skewed to polar residues; that stretch reads RSKPANSTKSP. Residues 592–601 are compositionally biased toward basic and acidic residues; that stretch reads ASLEDNRDLN. Residues 617–678 enclose the Myb-like domain; sequence VAKKITWRKQ…AITRLKWVEP (62 aa). Disordered stretches follow at residues 757 to 785 and 808 to 877; these read RGGT…FNSP and MQAR…TSIY. Polar residues-rich tracts occupy residues 775 to 785 and 819 to 836; these read SRGNNSTFNSP and SSSM…TSIS. Positions 856-871 are enriched in acidic residues; sequence EDDENEDNDDDDDMRE.

It belongs to the KNL2 family. Interacts with hcp-3.

It localises to the nucleus. The protein localises to the chromosome. It is found in the centromere. The protein resides in the kinetochore. In terms of biological role, required for the recruitment of hcp-3, hcp-4, knl-1, bub-1 and lin-53 to kinetochores, kinetochore assembly, chromosome condensation and chromosome segregation in meiosis and mitosis. This chain is Kinetochore null protein 2, found in Caenorhabditis elegans.